Here is a 562-residue protein sequence, read N- to C-terminus: Tetratricopeptide repeat protein 39A (562 aa).

TPR repeat units lie at residues 273–306, 463–496, and 504–537; these read AIFL…QQNW, CVVK…EKRI, and PNAM…YKNY.

This sequence belongs to the TTC39 family.

The protein is Tetratricopeptide repeat protein 39A (ttc39a) of Xenopus tropicalis (Western clawed frog).